Here is a 286-residue protein sequence, read N- to C-terminus: Prepilin leader peptidase/N-methyltransferase (286 aa).

The helical transmembrane segment at 11 to 31 (LGIFFVGLFSLMVGSFLNVVI) threads the bilayer. Zn(2+)-binding residues include cysteine 74, cysteine 77, cysteine 99, and cysteine 102. 6 helical membrane passes run 106–126 (ISARYLLVELLTAALSVIVAF), 132–152 (LSLGFALVFTWTLIALCFIDA), 161–181 (LTLPLLWLGILAALFNVFINL), 185–205 (VIGAMIGYLSLWSVYWLFKLI), 231–251 (LPIILFSAAILGMIYALGIGL), and 257–277 (MPFGPFLAIAGWLTFLYGAQI).

Belongs to the peptidase A24 family. The cofactor is Zn(2+).

It is found in the cell inner membrane. It carries out the reaction Typically cleaves a -Gly-|-Phe- bond to release an N-terminal, basic peptide of 5-8 residues from type IV prepilin, and then N-methylates the new N-terminal amino group, the methyl donor being S-adenosyl-L-methionine.. Plays an essential role in type IV pili and type II pseudopili formation by proteolytically removing the leader sequence from substrate proteins and subsequently monomethylating the alpha-amino group of the newly exposed N-terminal phenylalanine. The protein is Prepilin leader peptidase/N-methyltransferase (fimP) of Dichelobacter nodosus (Bacteroides nodosus).